Consider the following 922-residue polypeptide: MEGHGAQRSSPLARDLTRAFTSYNKHTVLLKKNLKETHAFFREMRQNYSNTCASSTLSSDSSSQETGQFSCISFPSHEEEFLRNTVGAAPYILVLGQDCAARYQLLNCLLGDRLLPLGPEAGQACHGGQGNVCKRRKLCFTHGRQTRLSLALPGQYELVHQLAANCGRWETVPREDLEILDECEDPAHRQAELEITLHHPLLQEAKVMVVPCPSVQPIEEALEDCTRSVIPIILYAVNRDSLSSEQVADLRKVKEILSFPVCYVRLPDASAASAELGQRCEKDKSKLQKQLLSRGLLGSLSGNCSCGAPAQTAAPGAKPQSVVGENFEKLHRILVPFTRQVLQNQQVEAASLLNGLHCRCLDLFINQAFDMQRDLQITPRRLEYTREKEGELFTSLMTIANRKQEEMKDMIVETLGSMKEQLLEDAANLEFTDIIVTTNGDPVTSKEIKSCIQQIQDLIVVRLNQAVANKLISSVDYLRESFVGTLERCLSSLEKSHIESSVHNITSNHLKQLLNAAYHVEVTFHSGSSVTRLFWEQIKQIIHRITFVNPPAITPEWKRKVAQDAIESLSAAKLARSICSQFRTRLYSSHEAFAASLRQLEERHTGRLERTEDLWLRVRKDHAPRLARLSLESRSLRDVVLHGKPKLGRELGRGQYGVVYLCDSWGGHNPCALKSVVPPDDKHWNDLALEFHYTRTLPKHERLVDLHGSVIDHTYAGGSSIAVLLIMERLHRDLYTGLKAGLSLQERLQIALDVVEGIRFLHSQGLLHRDIKLKNVLLDKQNRAKITDLGFCKPEAMMSGSIVGTPIHMAPELFTGKYDNSVDVYAFGILFWYLCAGSVKLPEAFEKCSSKDQLWNNVRKGARPERLPCFDEECWQLMEACWNGDPSQRPLLGIVEPSLESITVRMCNCGSEQKSSSLEDSC.

Residues 645–899 (PKLGRELGRG…PLLGIVEPSL (255 aa)) enclose the Protein kinase domain. Residues 651–659 (LGRGQYGVV) and K674 each bind ATP. The active-site Proton acceptor is D770.

This sequence belongs to the protein kinase superfamily. Ser/Thr protein kinase family.

Its subcellular location is the cytoplasm. The protein resides in the cell membrane. It is found in the apical cell membrane. It localises to the basolateral cell membrane. The protein localises to the cell junction. It carries out the reaction L-seryl-[protein] + ATP = O-phospho-L-seryl-[protein] + ADP + H(+). The catalysed reaction is L-threonyl-[protein] + ATP = O-phospho-L-threonyl-[protein] + ADP + H(+). The enzyme catalyses L-tyrosyl-[protein] + ATP = O-phospho-L-tyrosyl-[protein] + ADP + H(+). Its function is as follows. May act as a positive regulator of ERK phosphorylation downstream of fibroblast growth factor-receptor activation. May induce both caspase-dependent apoptosis and caspase-independent cell death. May play a role in the embryonic development. This Tetraodon nigroviridis (Spotted green pufferfish) protein is Dual serine/threonine and tyrosine protein kinase.